We begin with the raw amino-acid sequence, 119 residues long: C-C motif chemokine 24 (119 aa).

An N-terminal signal peptide occupies residues 1–26 (MAGLATFVVSLLLVTLCAHCIDPAGS). Cystine bridges form between cysteine 33/cysteine 58 and cysteine 34/cysteine 74. Residues asparagine 54 and asparagine 115 are each glycosylated (N-linked (GlcNAc...) asparagine).

It belongs to the intercrine beta (chemokine CC) family.

It is found in the secreted. Its function is as follows. Chemotactic for resting T-lymphocytes, and eosinophils. Has lower chemotactic activity for neutrophils but none for monocytes and activated lymphocytes. Is a strong suppressor of colony formation by a multipotential hematopoietic progenitor cell line. Binds to CCR3. This chain is C-C motif chemokine 24, found in Canis lupus familiaris (Dog).